The following is a 342-amino-acid chain: MADPKSSFLNVYSILKSELLQDPAFEFSTDSRQWVERMLDYNVPGGKLNRGLSVIDSYKLLKDGQELNDEEIFLASALGWCIEWLQAYFLVLDDIMDNSHTRRGHPCWFRVPKVGMIAPNDGVVLRNHIPRILKKHFRGKPYYVDLLDLFNEVEFQTASGQMIDLITTLEGEKDLSKYTLSLHRRIVQYKTAYYSFYLPVACALLMVGENLDNHTDVKNILVEMGTYFQVQDDYLDCFGAPETIGKIGTDIEDFKCSWLVVKALELSNEEQKKVLYENYGKPDPANVAKVKTLYNELNLEGAYADYESKSYEKLVTCIEGHPSKAVQGVLKSFWAKIYKRQK.

The isopentenyl diphosphate site is built by lysine 47, arginine 50, and glutamine 86. Aspartate 93 and aspartate 97 together coordinate Mg(2+). Arginine 102 is a binding site for dimethylallyl diphosphate. Residue arginine 103 coordinates isopentenyl diphosphate. Residues lysine 190, threonine 191, glutamine 229, lysine 246, and lysine 255 each contribute to the dimethylallyl diphosphate site.

The protein belongs to the FPP/GGPP synthase family. The cofactor is Mg(2+).

Its subcellular location is the cytoplasm. It carries out the reaction isopentenyl diphosphate + dimethylallyl diphosphate = (2E)-geranyl diphosphate + diphosphate. It catalyses the reaction isopentenyl diphosphate + (2E)-geranyl diphosphate = (2E,6E)-farnesyl diphosphate + diphosphate. It functions in the pathway isoprenoid biosynthesis; farnesyl diphosphate biosynthesis; farnesyl diphosphate from geranyl diphosphate and isopentenyl diphosphate: step 1/1. It participates in isoprenoid biosynthesis; geranyl diphosphate biosynthesis; geranyl diphosphate from dimethylallyl diphosphate and isopentenyl diphosphate: step 1/1. Catalyzes the sequential condensation of isopentenyl pyrophosphate with the allylic pyrophosphates, dimethylallyl pyrophosphate, and then with the resultant geranylpyrophosphate to the ultimate product farnesyl pyrophosphate. This chain is Farnesyl pyrophosphate synthase 2 (FPS2), found in Lupinus albus (White lupine).